Reading from the N-terminus, the 28-residue chain is Ribosome-inactivating protein pleuturegin (28 aa).

The protein belongs to the ribosome-inactivating protein family.

The enzyme catalyses Endohydrolysis of the N-glycosidic bond at one specific adenosine on the 28S rRNA.. In terms of biological role, inhibits protein synthesis in animal cells. Does not possess ribonuclease activity. The protein is Ribosome-inactivating protein pleuturegin of Pleurotus tuber-regium (King tuber oyster mushroom).